A 46-amino-acid chain; its full sequence is Viscotoxin-A2 (46 aa).

3 disulfides stabilise this stretch: cysteine 3/cysteine 40, cysteine 4/cysteine 32, and cysteine 16/cysteine 26.

It belongs to the plant thionin (TC 1.C.44) family.

Its subcellular location is the secreted. Thionins are small plant proteins which are toxic to animal cells. They seem to exert their toxic effect at the level of the cell membrane. Their precise function is not known. This Viscum album (European mistletoe) protein is Viscotoxin-A2 (THI2.3).